A 58-amino-acid polypeptide reads, in one-letter code: Curromycin resistance protein (58 aa).

Positions 1–37 (MSVVALGATSITPPHGPESQGRPFPARGPVRPSARAR) are disordered. Over residues 25 to 37 (PARGPVRPSARAR) the composition is skewed to low complexity.

This is Curromycin resistance protein (cre) from Streptomyces hygroscopicus.